A 404-amino-acid polypeptide reads, in one-letter code: MKNPYFPTALGLYFNYLVHGMGVLLMSLNMASLETLWQTNAAGVSIVISSLGIGRLSVLLFAGLLSDRFGRRPFIMLGMCCYMAFFFGILQTNNIIIAYVFGFLAGMANSFLDAGTYPSLMEAFPRSPGTANILIKAFVSSGQFLLPLIISLLVWAELWFGWSFMIAAGIMFINALFLYRCTFPPHPGRRLPVIKKTTSSTEHRCSIIDLASYTLYGYISMATFYLVSQWLAQYGQFVAGMSYTMSIKLLSIYTVGSLLCVFITAPLIRNTVRPTTLLMLYTFISFIALFTVCLHPTFYVVIIFAFVIGFTSAGGVVQIGLTLMAERFPYAKGKATGIYYSAGSIATFTIPLITAHLSQRSIADIMWFDTAIAAIGFLLALFIGLRSRKKTRHHSLKENVAPGG.

Over 1 to 5 (MKNPY) the chain is Periplasmic. Residues 6-26 (FPTALGLYFNYLVHGMGVLLM) form a helical membrane-spanning segment. Residues 27 to 43 (SLNMASLETLWQTNAAG) are Cytoplasmic-facing. A helical transmembrane segment spans residues 44 to 64 (VSIVISSLGIGRLSVLLFAGL). Over 65–84 (LSDRFGRRPFIMLGMCCYMA) the chain is Periplasmic. Residues 85 to 105 (FFFGILQTNNIIIAYVFGFLA) traverse the membrane as a helical segment. The Cytoplasmic portion of the chain corresponds to 106 to 132 (GMANSFLDAGTYPSLMEAFPRSPGTAN). A helical membrane pass occupies residues 133–153 (ILIKAFVSSGQFLLPLIISLL). Over 154-157 (VWAE) the chain is Periplasmic. The helical transmembrane segment at 158-178 (LWFGWSFMIAAGIMFINALFL) threads the bilayer. Topologically, residues 179 to 206 (YRCTFPPHPGRRLPVIKKTTSSTEHRCS) are cytoplasmic. A helical membrane pass occupies residues 207-227 (IIDLASYTLYGYISMATFYLV). The Periplasmic segment spans residues 228–246 (SQWLAQYGQFVAGMSYTMS). A helical transmembrane segment spans residues 247–267 (IKLLSIYTVGSLLCVFITAPL). At 268–273 (IRNTVR) the chain is on the cytoplasmic side. Residues 274–294 (PTTLLMLYTFISFIALFTVCL) traverse the membrane as a helical segment. The Periplasmic segment spans residues 295-296 (HP). A helical transmembrane segment spans residues 297-317 (TFYVVIIFAFVIGFTSAGGVV). Residues 318 to 336 (QIGLTLMAERFPYAKGKAT) lie on the Cytoplasmic side of the membrane. A helical transmembrane segment spans residues 337-357 (GIYYSAGSIATFTIPLITAHL). The Periplasmic portion of the chain corresponds to 358-364 (SQRSIAD). Residues 365 to 385 (IMWFDTAIAAIGFLLALFIGL) traverse the membrane as a helical segment. At 386-404 (RSRKKTRHHSLKENVAPGG) the chain is on the cytoplasmic side.

This sequence belongs to the major facilitator superfamily.

It is found in the cell inner membrane. In Escherichia coli (strain K12), this protein is Inner membrane transport protein YdiM (ydiM).